Here is a 289-residue protein sequence, read N- to C-terminus: Ribosome-inactivating protein alpha-trichosanthin (289 aa).

The first 23 residues, 1 to 23 (MIRFLVLSLLILTLFLTTPAVEG), serve as a signal peptide directing secretion. The active site involves Glu-183. The propeptide at 271–289 (AMDDDVPMTQSFGCGSYAI) is removed in mature form.

It belongs to the ribosome-inactivating protein family. Type 1 RIP subfamily.

It carries out the reaction Endohydrolysis of the N-glycosidic bond at one specific adenosine on the 28S rRNA.. In terms of biological role, inactivates eukaryotic 60S ribosomal subunits. The sequence is that of Ribosome-inactivating protein alpha-trichosanthin from Trichosanthes kirilowii (Chinese snake gourd).